The chain runs to 368 residues: HECT-type ubiquitin ligase-interacting protein apyA (368 aa).

It belongs to the arrestin family. As to quaternary structure, interacts with hulA.

May be involved in signaling by recognizing appropriately phosphorylated substrates via its arrestin domains and then recruit a HECT-type ubiquitin ligase such as hulA, leading to ubiquitination of the substrate, providing a link between ubiquitination and phosphorylation in protein regulation and stability. This chain is HECT-type ubiquitin ligase-interacting protein apyA (apyA), found in Emericella nidulans (strain FGSC A4 / ATCC 38163 / CBS 112.46 / NRRL 194 / M139) (Aspergillus nidulans).